Reading from the N-terminus, the 547-residue chain is Glucose-6-phosphate isomerase (547 aa).

The active-site Proton donor is the Glu-351. Residues His-382 and Lys-509 contribute to the active site.

Belongs to the GPI family.

The protein resides in the cytoplasm. The enzyme catalyses alpha-D-glucose 6-phosphate = beta-D-fructose 6-phosphate. The protein operates within carbohydrate biosynthesis; gluconeogenesis. Its pathway is carbohydrate degradation; glycolysis; D-glyceraldehyde 3-phosphate and glycerone phosphate from D-glucose: step 2/4. Its function is as follows. Catalyzes the reversible isomerization of glucose-6-phosphate to fructose-6-phosphate. In Coxiella burnetii (strain CbuG_Q212) (Coxiella burnetii (strain Q212)), this protein is Glucose-6-phosphate isomerase.